We begin with the raw amino-acid sequence, 190 residues long: Translation initiation factor IF-3 (190 aa).

The protein belongs to the IF-3 family. As to quaternary structure, monomer.

The protein localises to the cytoplasm. IF-3 binds to the 30S ribosomal subunit and shifts the equilibrium between 70S ribosomes and their 50S and 30S subunits in favor of the free subunits, thus enhancing the availability of 30S subunits on which protein synthesis initiation begins. The sequence is that of Translation initiation factor IF-3 from Prochlorococcus marinus (strain AS9601).